The primary structure comprises 520 residues: GMP synthase [glutamine-hydrolyzing] (520 aa).

The Glutamine amidotransferase type-1 domain maps to 4–202; the sequence is KILILDFGSQ…VHDICGCGSD (199 aa). The active-site Nucleophile is the Cys81. Catalysis depends on residues His176 and Glu178. The GMPS ATP-PPase domain maps to 203-395; that stretch reads WNMPDYVEEA…LGLPHDMVYR (193 aa). 230-236 contacts ATP; that stretch reads SGGVDSS.

Homodimer.

The enzyme catalyses XMP + L-glutamine + ATP + H2O = GMP + L-glutamate + AMP + diphosphate + 2 H(+). It participates in purine metabolism; GMP biosynthesis; GMP from XMP (L-Gln route): step 1/1. In terms of biological role, catalyzes the synthesis of GMP from XMP. In Thiobacillus denitrificans (strain ATCC 25259 / T1), this protein is GMP synthase [glutamine-hydrolyzing].